Consider the following 302-residue polypeptide: Probable protein ABIL4 (302 aa).

Disordered stretches follow at residues 151 to 179 (PSTGHKRTQAARLQTDNGQDSKPKPYPSA) and 220 to 256 (LLGKDIPASPMHKPLQPNGNTSFDAKKNVGSKDQPGF). Positions 161–170 (ARLQTDNGQD) are enriched in polar residues.

The protein belongs to the ABI family. Binds SCAR.

It localises to the cytoplasm. The protein localises to the cytoskeleton. In terms of biological role, involved in regulation of actin and microtubule organization. Part of a WAVE complex that activates the Arp2/3 complex. This Oryza sativa subsp. japonica (Rice) protein is Probable protein ABIL4.